The chain runs to 221 residues: U1 small nuclear ribonucleoprotein C (221 aa).

A Matrin-type zinc finger spans residues 4–36; the sequence is HYCDYCDVFLTHDSVSVRKAHNSGRNHLQNVRE. A disordered region spans residues 80-221; that stretch reads GAGPLSGSSD…PHSRTGYGPR (142 aa). Pro residues predominate over residues 142–158; the sequence is YSRPPPQGGPYSRPPPD. A compositionally biased stretch (low complexity) spans 178-190; the sequence is PLGYGAPLPGAYP. The segment covering 191-204 has biased composition (pro residues); the sequence is SGPPPNMRGPPPPL.

Belongs to the U1 small nuclear ribonucleoprotein C family. As to quaternary structure, U1 snRNP is composed of the 7 core Sm proteins B/B', D1, D2, D3, E, F and G that assemble in a heptameric protein ring on the Sm site of the small nuclear RNA to form the core snRNP, and at least 3 U1 snRNP-specific proteins U1-70K, U1-A and U1-C. U1-C interacts with U1 snRNA and the 5' splice-site region of the pre-mRNA.

It is found in the nucleus. In terms of biological role, component of the spliceosomal U1 snRNP, which is essential for recognition of the pre-mRNA 5' splice-site and the subsequent assembly of the spliceosome. U1-C is directly involved in initial 5' splice-site recognition for both constitutive and regulated alternative splicing. The interaction with the 5' splice-site seems to precede base-pairing between the pre-mRNA and the U1 snRNA. Stimulates commitment or early (E) complex formation by stabilizing the base pairing of the 5' end of the U1 snRNA and the 5' splice-site region. This is U1 small nuclear ribonucleoprotein C from Mycosarcoma maydis (Corn smut fungus).